Here is an 83-residue protein sequence, read N- to C-terminus: Exodeoxyribonuclease 7 small subunit (83 aa).

Belongs to the XseB family. In terms of assembly, heterooligomer composed of large and small subunits.

It is found in the cytoplasm. It carries out the reaction Exonucleolytic cleavage in either 5'- to 3'- or 3'- to 5'-direction to yield nucleoside 5'-phosphates.. Its function is as follows. Bidirectionally degrades single-stranded DNA into large acid-insoluble oligonucleotides, which are then degraded further into small acid-soluble oligonucleotides. The polypeptide is Exodeoxyribonuclease 7 small subunit (Rhizobium rhizogenes (strain K84 / ATCC BAA-868) (Agrobacterium radiobacter)).